We begin with the raw amino-acid sequence, 189 residues long: Peptidyl-tRNA hydrolase (189 aa).

Tyr15 serves as a coordination point for tRNA. His20 acts as the Proton acceptor in catalysis. Residues Phe64 and Asn66 each coordinate tRNA.

Belongs to the PTH family. As to quaternary structure, monomer.

It is found in the cytoplasm. The enzyme catalyses an N-acyl-L-alpha-aminoacyl-tRNA + H2O = an N-acyl-L-amino acid + a tRNA + H(+). Functionally, hydrolyzes ribosome-free peptidyl-tRNAs (with 1 or more amino acids incorporated), which drop off the ribosome during protein synthesis, or as a result of ribosome stalling. Catalyzes the release of premature peptidyl moieties from peptidyl-tRNA molecules trapped in stalled 50S ribosomal subunits, and thus maintains levels of free tRNAs and 50S ribosomes. The polypeptide is Peptidyl-tRNA hydrolase (Persephonella marina (strain DSM 14350 / EX-H1)).